A 202-amino-acid polypeptide reads, in one-letter code: MPCPGLQENVTIYKLSIDICRSSRSSSPMNLLATSPSASTAFFQRSAGRWHSQRRYYTLNSDQEPLEAISAIEVVFLPAEHPHLKPLAIAHHLSPDQAFQCGAKVTWESTYTNVQRKPLKGETIFGIRDQLMYRDRGFSTTAPIVAEFELIQPHVMRLQTAYDGASFEEEIKFVGDKHRTRQTITSRAGQELMIAQYLETRL.

It belongs to the CpcS/CpeS biliprotein lyase family.

Covalently attaches a chromophore to Cys residue(s) of phycobiliproteins. The polypeptide is Putative chromophore lyase CpcV (cpcV) (Picosynechococcus sp. (strain ATCC 27264 / PCC 7002 / PR-6) (Agmenellum quadruplicatum)).